We begin with the raw amino-acid sequence, 347 residues long: Protein RecA (347 aa).

Residue 65–72 (GPESSGKT) coordinates ATP.

Belongs to the RecA family.

The protein resides in the cytoplasm. Its function is as follows. Can catalyze the hydrolysis of ATP in the presence of single-stranded DNA, the ATP-dependent uptake of single-stranded DNA by duplex DNA, and the ATP-dependent hybridization of homologous single-stranded DNAs. It interacts with LexA causing its activation and leading to its autocatalytic cleavage. The chain is Protein RecA from Aliivibrio salmonicida (strain LFI1238) (Vibrio salmonicida (strain LFI1238)).